A 175-amino-acid chain; its full sequence is ATP synthase subunit b (175 aa).

Residues 19–39 traverse the membrane as a helical segment; that stretch reads LVVGTIAFALLVFVLLKFVMP.

This sequence belongs to the ATPase B chain family. F-type ATPases have 2 components, F(1) - the catalytic core - and F(0) - the membrane proton channel. F(1) has five subunits: alpha(3), beta(3), gamma(1), delta(1), epsilon(1). F(0) has three main subunits: a(1), b(2) and c(10-14). The alpha and beta chains form an alternating ring which encloses part of the gamma chain. F(1) is attached to F(0) by a central stalk formed by the gamma and epsilon chains, while a peripheral stalk is formed by the delta and b chains.

The protein resides in the cell membrane. In terms of biological role, f(1)F(0) ATP synthase produces ATP from ADP in the presence of a proton or sodium gradient. F-type ATPases consist of two structural domains, F(1) containing the extramembraneous catalytic core and F(0) containing the membrane proton channel, linked together by a central stalk and a peripheral stalk. During catalysis, ATP synthesis in the catalytic domain of F(1) is coupled via a rotary mechanism of the central stalk subunits to proton translocation. Functionally, component of the F(0) channel, it forms part of the peripheral stalk, linking F(1) to F(0). This chain is ATP synthase subunit b, found in Salinispora tropica (strain ATCC BAA-916 / DSM 44818 / JCM 13857 / NBRC 105044 / CNB-440).